A 208-amino-acid polypeptide reads, in one-letter code: Ras-related protein Rab-6A (208 aa).

S2 carries the post-translational modification N-acetylserine. 10 residues coordinate GTP: S23, V24, G25, K26, T27, S28, D39, N40, Y42, and T45. T27 contacts Mg(2+). The short motif at 32 to 50 (RFMYDSFDNTYQATIGIDF) is the Switch 1 element. 2 residues coordinate Mg(2+): T45 and D68. The short motif at 69-88 (TAGQERFRSLIPSYIRDSAA) is the Switch 2 element. Residues G71, N126, K127, D129, S156, A157, and K158 each coordinate GTP. S-geranylgeranyl cysteine attachment occurs at residues C206 and C208. Residue C208 is modified to Cysteine methyl ester.

It belongs to the small GTPase superfamily. Rab family. It depends on Mg(2+) as a cofactor.

It is found in the golgi apparatus membrane. The catalysed reaction is GTP + H2O = GDP + phosphate + H(+). Regulated by guanine nucleotide exchange factors (GEFs) which promote the exchange of bound GDP for free GTP. Regulated by GTPase activating proteins (GAPs) which increase the GTP hydrolysis activity. Inhibited by GDP dissociation inhibitors (GDIs). In terms of biological role, the small GTPases Rab are key regulators of intracellular membrane trafficking, from the formation of transport vesicles to their fusion with membranes. Rabs cycle between an inactive GDP-bound form and an active GTP-bound form that is able to recruit to membranes different sets of downstream effectors directly responsible for vesicle formation, movement, tethering and fusion. RAB6A acts as a regulator of COPI-independent retrograde transport from the Golgi apparatus towards the endoplasmic reticulum (ER). The chain is Ras-related protein Rab-6A (RAB6A) from Gallus gallus (Chicken).